Consider the following 121-residue polypeptide: Large ribosomal subunit protein bL12 (121 aa).

It belongs to the bacterial ribosomal protein bL12 family. Homodimer. Part of the ribosomal stalk of the 50S ribosomal subunit. Forms a multimeric L10(L12)X complex, where L10 forms an elongated spine to which 2 to 4 L12 dimers bind in a sequential fashion. Binds GTP-bound translation factors.

Its function is as follows. Forms part of the ribosomal stalk which helps the ribosome interact with GTP-bound translation factors. Is thus essential for accurate translation. This is Large ribosomal subunit protein bL12 from Limosilactobacillus fermentum (strain NBRC 3956 / LMG 18251) (Lactobacillus fermentum).